Here is a 488-residue protein sequence, read N- to C-terminus: N-succinylglutamate 5-semialdehyde dehydrogenase 2 (488 aa).

Gly-221–Gly-226 is an NAD(+) binding site. Catalysis depends on residues Glu-244 and Cys-278.

It belongs to the aldehyde dehydrogenase family. AstD subfamily.

It carries out the reaction N-succinyl-L-glutamate 5-semialdehyde + NAD(+) + H2O = N-succinyl-L-glutamate + NADH + 2 H(+). It participates in amino-acid degradation; L-arginine degradation via AST pathway; L-glutamate and succinate from L-arginine: step 4/5. In terms of biological role, catalyzes the NAD-dependent reduction of succinylglutamate semialdehyde into succinylglutamate. The sequence is that of N-succinylglutamate 5-semialdehyde dehydrogenase 2 from Pseudoalteromonas translucida (strain TAC 125).